A 718-amino-acid polypeptide reads, in one-letter code: MVRKHGWQLPAHKFQVVAITVFCLLSVAYYAFFAPFVGGRIWEYILLGVYSPVALIVFVLYVRCTAINPADPGIMSKFERGASRGGDLPTAKDISRKFDETGSHLQSSPSVASRTSTLPNSSVKGSVGDAQRVEAAKRKSCFNPLAICCGVFVYEDCRSKEETDEQQGDREEALFCTLCNAEVRKFSKHCRSCDKCVDCFDHHCRWLNNCVGRKNYMTFISLMAVSLLWLLIEAGVGIAVIVRVFVNKKDMETEIVNRLGNGFSRAPFATVVGLCTAVSMLALFPLGELFFFHMLLIKKGITTYEYVVAMRAMSEAPAGASIDEEIPNVLYSPSGSATTGFSGGSSLGLPYKGAWCTPPRVFVDYQDEVIPHLDPRMVPSTVDPDAAETAERGNKIPKRPVKISAWKLAKLNSNEATRAAARARASSSVLRPIENRHLHDDELSSRSGTISVVSSVSTEANGATLSREIRNNDPMLSHCRNSYAPSQGSRDEYDTGTHSMSSLSSPSHVHETVTLSPLPQHHTAGHRFTAAAASNSSRPPLNQATNHMIHSTFDEKIMQKGNHADPLLLPAPAASLLRDVRRTSVVWDQEAGRYISVPATTSEPRTRFSSQNQPIPSSHMGNTQNPRPVGHPPQDSSSGRAPPPTQQQQGERLMYTGESIFFGGPLVNIPNRDGLRHDGDSGREGQDRMTLTLPREARFKRDTTSNQLPVFAPVGTRK.

The next 2 helical transmembrane spans lie at 16 to 36 (VVAI…FAPF) and 41 to 61 (IWEY…FVLY). The segment at 100–125 (ETGSHLQSSPSVASRTSTLPNSSVKG) is disordered. Over residues 103–124 (SHLQSSPSVASRTSTLPNSSVK) the composition is skewed to polar residues. One can recognise a DHHC domain in the interval 174-224 (LFCTLCNAEVRKFSKHCRSCDKCVDCFDHHCRWLNNCVGRKNYMTFISLMA). Cys-204 (S-palmitoyl cysteine intermediate) is an active-site residue. A run of 2 helical transmembrane segments spans residues 222 to 242 (LMAV…AVIV) and 277 to 297 (AVSM…MLLI). Disordered stretches follow at residues 454 to 511 (SSVS…HVHE), 598 to 649 (PATT…QQQQ), and 664 to 718 (GPLV…GTRK). 2 stretches are compositionally biased toward polar residues: residues 479-488 (CRNSYAPSQG) and 598-626 (PATT…TQNP). Over residues 673-687 (DGLRHDGDSGREGQD) the composition is skewed to basic and acidic residues.

Belongs to the DHHC palmitoyltransferase family.

The protein localises to the cell membrane. It carries out the reaction L-cysteinyl-[protein] + hexadecanoyl-CoA = S-hexadecanoyl-L-cysteinyl-[protein] + CoA. Its function is as follows. Palmitoyl acyltransferase. The protein is Probable protein S-acyltransferase 19 (PAT19) of Arabidopsis thaliana (Mouse-ear cress).